The sequence spans 247 residues: tRNA uridine(34) hydroxylase (247 aa).

Positions threonine 124–asparagine 218 constitute a Rhodanese domain. Residue cysteine 178 is the Cysteine persulfide intermediate of the active site.

Belongs to the TrhO family.

The catalysed reaction is uridine(34) in tRNA + AH2 + O2 = 5-hydroxyuridine(34) in tRNA + A + H2O. Catalyzes oxygen-dependent 5-hydroxyuridine (ho5U) modification at position 34 in tRNAs. This Rickettsia akari (strain Hartford) protein is tRNA uridine(34) hydroxylase.